Here is a 429-residue protein sequence, read N- to C-terminus: Enolase (429 aa).

Gln-162 is a (2R)-2-phosphoglycerate binding site. Residue Glu-204 is the Proton donor of the active site. The Mg(2+) site is built by Asp-241, Glu-288, and Asp-315. 4 residues coordinate (2R)-2-phosphoglycerate: Lys-340, Arg-369, Ser-370, and Lys-391. Lys-340 (proton acceptor) is an active-site residue.

Belongs to the enolase family. Mg(2+) serves as cofactor.

It localises to the cytoplasm. The protein resides in the secreted. It is found in the cell surface. It catalyses the reaction (2R)-2-phosphoglycerate = phosphoenolpyruvate + H2O. The protein operates within carbohydrate degradation; glycolysis; pyruvate from D-glyceraldehyde 3-phosphate: step 4/5. Catalyzes the reversible conversion of 2-phosphoglycerate (2-PG) into phosphoenolpyruvate (PEP). It is essential for the degradation of carbohydrates via glycolysis. The polypeptide is Enolase (Christiangramia forsetii (strain DSM 17595 / CGMCC 1.15422 / KT0803) (Gramella forsetii)).